A 127-amino-acid chain; its full sequence is MSDNEDNFDGDDFDDVEEDEGLDDLENAEEEGQENVEILPSGERPQANQKRITTPYMTKYERARVLGTRALQIAMCAPVMVELEGETDPLLIAMKELKARKIPIIIRRYLPDGSYEDWGVDELIITD.

Residues 1 to 34 (MSDNEDNFDGDDFDDVEEDEGLDDLENAEEEGQE) are compositionally biased toward acidic residues. Residues 1-53 (MSDNEDNFDGDDFDDVEEDEGLDDLENAEEEGQENVEILPSGERPQANQKRIT) form a disordered region. Ser-2 bears the N-acetylserine mark. The residue at position 2 (Ser-2) is a Phosphoserine; by CK2.

This sequence belongs to the archaeal Rpo6/eukaryotic RPB6 RNA polymerase subunit family. Component of the RNA polymerase I (Pol I), RNA polymerase II (Pol II) and RNA polymerase III (Pol III) complexes consisting of at least 13, 12 and 17 subunits, respectively. Pol I complex consists of a ten-subunit catalytic core composed of POLR1A/RPA1, POLR1B/RPA2, POLR1C/RPAC1, POLR1D/RPAC2, POLR1H/RPA12, POLR2E/RPABC1, POLR2F/RPABC2, POLR2H/RPABC3, POLR2K/RPABC4 and POLR2L/RPABC5; a mobile stalk subunit POLR1F/RPA43 protruding from the core and additional subunits homologous to general transcription factors POLR1E/RPA49 and POLR1G/RPA34. Part of Pol I pre-initiation complex (PIC), in which Pol I core assembles with RRN3 and promoter-bound UTBF and SL1/TIF-IB complex. Pol II complex contains a ten-subunit catalytic core composed of POLR2A/RPB1, POLR2B/RPB2, POLR2C/RPB3, POLR2I/RPB9, POLR2J/RPB11, POLR2E/RPABC1, POLR2F/RPABC2, POLR2H/RPABC3, POLR2K/RPABC4 and POLR2L/RPABC5 and a mobile stalk composed of two subunits POLR2D/RPB4 and POLR2G/RPB7. Part of Pol II(G) complex, in which Pol II core associates with an additional subunit POLR2M; unlike conventional Pol II, Pol II(G) functions as a transcriptional repressor. Part of TBP-based Pol II pre-initiation complex (PIC), in which Pol II core assembles with general transcription factors and other specific initiation factors including GTF2E1, GTF2E2, GTF2F1, GTF2F2, TCEA1, ERCC2, ERCC3, GTF2H2, GTF2H3, GTF2H4, GTF2H5, GTF2A1, GTF2A2, GTF2B and TBP; this large multi-subunit PIC complex mediates DNA unwinding and targets Pol II core to the transcription start site where the first phosphodiester bond forms. Pol III complex consists of a ten-subunit catalytic core composed of POLR3A/RPC1, POLR3B/RPC2, POLR1C/RPAC1, POLR1D/RPAC2, POLR3K/RPC10, POLR2E/RPABC1, POLR2F/RPABC2, POLR2H/RPABC3, POLR2K/RPABC4 and POLR2L/RPABC5; a mobile stalk composed of two subunits POLR3H/RPC8 and CRCP/RPC9, protruding from the core and functioning primarily in transcription initiation; and additional subunits homologous to general transcription factors of the RNA polymerase II machinery, POLR3C/RPC3-POLR3F/RPC6-POLR3G/RPC7 heterotrimer required for transcription initiation and POLR3D/RPC4-POLR3E/RPC5 heterodimer involved in both transcription initiation and termination.

The protein resides in the nucleus. It localises to the nucleolus. DNA-dependent RNA polymerase catalyzes the transcription of DNA into RNA using the four ribonucleoside triphosphates as substrates. Common component of RNA polymerases I, II, and III which synthesize ribosomal RNA precursors, mRNA precursors and many functional non-coding RNAs, and small RNAs, such as 5S rRNA and tRNAs, respectively. Pol II is the central component of the basal RNA polymerase II transcription machinery. Pols are composed of mobile elements that move relative to each other. In Pol II, POLR2F/RPABC2 is part of the clamp element and together with parts of POLR2A/RPB1 and POLR2B/RPB2 forms a pocket to which the POLR2D/RPB4-POLR2G/RPB7 subcomplex binds. This chain is DNA-directed RNA polymerases I, II, and III subunit RPABC2, found in Homo sapiens (Human).